Consider the following 142-residue polypeptide: Trafficking protein particle complex subunit 1 (142 aa).

Belongs to the TRAPP small subunits family. BET5 subfamily. As to quaternary structure, part of the multisubunit TRAPP (transport protein particle) complex.

It localises to the golgi apparatus. The protein resides in the cis-Golgi network. It is found in the endoplasmic reticulum. May play a role in vesicular transport from endoplasmic reticulum to Golgi. The chain is Trafficking protein particle complex subunit 1 (trappc1-1) from Dictyostelium discoideum (Social amoeba).